The following is a 160-amino-acid chain: General odorant-binding protein 2 (160 aa).

Residues 1–19 form the signal peptide; sequence MGYKLLLMYIAIVIDSVIG. Cystine bridges form between cysteine 38/cysteine 73, cysteine 69/cysteine 127, and cysteine 116/cysteine 136.

This sequence belongs to the PBP/GOBP family. In terms of tissue distribution, antenna.

Present in the aqueous fluid surrounding olfactory sensory dendrites and are thought to aid in the capture and transport of hydrophobic odorants into and through this fluid. In Antheraea pernyi (Chinese oak silk moth), this protein is General odorant-binding protein 2.